A 463-amino-acid polypeptide reads, in one-letter code: MMAATVVSRIRTGTRWAPVLWLLLSLVAVAAAVAAEQQVPLVLWSSDRDLWAPVADTHEGHITSDMQLSTYLDPALELGPRNVLLFLQDKLSIEDFTAYGGVFGNKQDSAFSNLENALDLAPSSLVLPAVDWYAISTLTTYLQEKLGASPLHVDLATLKELKLNASLPALLLIRLPYTASSGLMAPREVLTGNDEVIGQVLSTLESEDVPYTAALTAVRPSRVARDVAMVAGGLGRQLLQTQVASPAIHPPVSYNDTAPRILFWAQNFSVAYKDEWKDLTSLTFGVENLNLTGSFWNDSFAMLSLTYEPLFGATVTFKFILASRFYPVSARYWFTMERLEIHSNGSVAHFNVSQVTGPSIYSFHCEYVSSLSKKGSLLVTNVPSLWQMTLHNFQIQAFNVTGEQFSYASDCAGFFSPGIWMGLLTTLFMLFIFTYGLHMILSLKTMDRFDDRKGPTITLTQIV.

A signal peptide spans 1-32; sequence MMAATVVSRIRTGTRWAPVLWLLLSLVAVAAA. The propeptide occupies 33–225; sequence VAAEQQVPLV…TAVRPSRVAR (193 aa). The Lumenal segment spans residues 33-412; it reads VAAEQQVPLV…EQFSYASDCA (380 aa). N-linked (GlcNAc...) asparagine glycans are attached at residues N164, N255, N267, N290, N297, N344, N351, and N399. The chain crosses the membrane as a helical span at residues 413–433; the sequence is GFFSPGIWMGLLTTLFMLFIF. Over 434–463 the chain is Cytoplasmic; the sequence is TYGLHMILSLKTMDRFDDRKGPTITLTQIV.

It belongs to the vacuolar ATPase subunit S1 family. In terms of assembly, accessory component of the multisubunit proton-transporting vacuolar (V)-ATPase protein pump. Interacts (via N-terminus) with ATP6AP2 (via N-terminus). Interacts with RNASEK. Interacts with TMEM106B (via C-terminus). In terms of processing, N-glycosylated. Expressed in brain (at protein level).

It localises to the endoplasmic reticulum membrane. The protein resides in the endoplasmic reticulum-Golgi intermediate compartment membrane. The protein localises to the cytoplasmic vesicle. Its subcellular location is the secretory vesicle. It is found in the synaptic vesicle membrane. It localises to the clathrin-coated vesicle membrane. Accessory subunit of the proton-transporting vacuolar (V)-ATPase protein pump, which is required for luminal acidification of secretory vesicles. Guides the V-type ATPase into specialized subcellular compartments, such as neuroendocrine regulated secretory vesicles or the ruffled border of the osteoclast, thereby regulating its activity. Involved in membrane trafficking and Ca(2+)-dependent membrane fusion. May play a role in the assembly of the V-type ATPase complex. In aerobic conditions, involved in intracellular iron homeostasis, thus triggering the activity of Fe(2+) prolyl hydroxylase (PHD) enzymes, and leading to HIF1A hydroxylation and subsequent proteasomal degradation. In islets of Langerhans cells, may regulate the acidification of dense-core secretory granules. This Rattus norvegicus (Rat) protein is V-type proton ATPase subunit S1 (Atp6ap1).